Here is a 511-residue protein sequence, read N- to C-terminus: DEP domain-containing protein 7 (511 aa).

Residues 46–136 enclose the DEP domain; it reads LQTQVEVKKR…SSCSLYRFTT (91 aa).

Belongs to the DEPDC7 family.

The sequence is that of DEP domain-containing protein 7 (DEPDC7) from Pongo abelii (Sumatran orangutan).